Consider the following 635-residue polypeptide: Probable retaining alpha-galactosidase (635 aa).

The N-terminal stretch at 1 to 30 (MARSVRRTTLALLLSAVLAMTLFVTAPAHA) is a signal peptide. Residue Asp179 participates in Ca(2+) binding. Asp397 (nucleophile) is an active-site residue. Ca(2+) contacts are provided by Glu446 and Glu452. Catalysis depends on Glu452, which acts as the Proton donor/acceptor.

It belongs to the glycosyl hydrolase 97 family. Ca(2+) serves as cofactor.

It carries out the reaction Hydrolysis of terminal, non-reducing alpha-D-galactose residues in alpha-D-galactosides, including galactose oligosaccharides, galactomannans and galactolipids.. The polypeptide is Probable retaining alpha-galactosidase (Streptomyces bingchenggensis (strain BCW-1)).